Consider the following 110-residue polypeptide: UPF0060 membrane protein SACE_5620 (110 aa).

4 consecutive transmembrane segments (helical) span residues 8 to 28 (VVLF…VWQG), 34 to 54 (GLLW…VATF), 63 to 83 (ILAA…VVVD), and 89 to 109 (RWDL…MYAP).

Belongs to the UPF0060 family.

It is found in the cell membrane. The polypeptide is UPF0060 membrane protein SACE_5620 (Saccharopolyspora erythraea (strain ATCC 11635 / DSM 40517 / JCM 4748 / NBRC 13426 / NCIMB 8594 / NRRL 2338)).